A 215-amino-acid polypeptide reads, in one-letter code: Pyrrolidone-carboxylate peptidase (215 aa).

Active-site residues include Glu-80, Cys-143, and His-167.

This sequence belongs to the peptidase C15 family. Homotetramer.

Its subcellular location is the cytoplasm. It carries out the reaction Release of an N-terminal pyroglutamyl group from a polypeptide, the second amino acid generally not being Pro.. In terms of biological role, removes 5-oxoproline from various penultimate amino acid residues except L-proline. The sequence is that of Pyrrolidone-carboxylate peptidase from Yersinia pestis bv. Antiqua (strain Antiqua).